Here is a 30-residue protein sequence, read N- to C-terminus: Non-toxic phospholipase A2 (30 aa).

Residues Tyr26, Gly28, and Gly30 each coordinate Ca(2+).

Belongs to the phospholipase A2 family. Group I subfamily. Homodimer. Ca(2+) serves as cofactor. Post-translationally, glycosylated. As to expression, expressed by the venom gland.

It is found in the secreted. It carries out the reaction a 1,2-diacyl-sn-glycero-3-phosphocholine + H2O = a 1-acyl-sn-glycero-3-phosphocholine + a fatty acid + H(+). Enzymatic activity is diminished by Cd(2+) and Hg(2+). Relatively highly potent phospholipase A2 that displays potent antimicrobial and hemolytic activities. It does not show cytotoxic effects on the three human cell lines tested. PLA2 catalyzes the calcium-dependent hydrolysis of the 2-acyl groups in 3-sn-phosphoglycerides. It shows similar potencies on both Gram-negative and Gram-positive bacteria: B.cereus (MIC&gt;9 ug/ml), B.subtilis (MIC&gt;12 ug/ml), E.faecalis (MIC&gt;7 ug/ml), S.epidermidis (MIC&gt;12 ug/ml), S.aureux (MIC&gt;5 ug/ml), E.coli (MIC&gt;7 ug/ml), K.pneumonia (MIC&gt;8 ug/ml), P.aeruginosa (MIC&gt;10 ug/ml), and S.enteric (MIC&gt;9 ug/ml). It also shows antifungal activities: A.niger (MIC&gt;15 ug/ml), B.cinerea (MIC&gt;12 ug/ml), F.solani (MIC&gt;15 ug/ml), and P.digitatum (MIC&gt;10 ug/ml). The polypeptide is Non-toxic phospholipase A2 (Walterinnesia aegyptia (Desert black snake)).